The primary structure comprises 325 residues: Melanocortin receptor 5 (325 aa).

The Extracellular portion of the chain corresponds to 1–37; it reads MNSSSHLTLLDLTLNASEDNILGQNVNNKSSACEDMG. N-linked (GlcNAc...) asparagine glycans are attached at residues Asn2, Asn15, and Asn28. The helical transmembrane segment at 38 to 61 threads the bilayer; it reads IAVEVFLTLGLVSLLENILVIGAI. The Cytoplasmic segment spans residues 62-73; sequence VKNKNLHSPMYF. Residues 74–97 form a helical membrane-spanning segment; it reads FVGSLAVADMLVSMSNAWETITIY. Topologically, residues 98 to 114 are extracellular; the sequence is LINNKHVVIADTFVRHI. A helical transmembrane segment spans residues 115 to 138; the sequence is DNVFDSMICISVVASMCSLLAIAV. Residues 139 to 155 lie on the Cytoplasmic side of the membrane; the sequence is DRYITIFYALRYHHIMT. A helical transmembrane segment spans residues 156–179; sequence ARRSGVIIACIWTFCISCGIVFII. At 180-186 the chain is on the extracellular side; the sequence is YYESKYV. The chain crosses the membrane as a helical span at residues 187–211; that stretch reads IVCLISMFFTMLFFMVSLYIHMFLL. Over 212–239 the chain is Cytoplasmic; it reads ARNHVKRIAASPRYNSVRQRASMKGAIT. A helical transmembrane segment spans residues 240 to 265; the sequence is LTMLLGIFIVCWSPFFLHLILMISCP. The Extracellular segment spans residues 266–273; sequence QNVYCACF. Residues 274 to 297 form a helical membrane-spanning segment; that stretch reads MSYFNMYLILIMCNSVIDPLIYAL. Residues 298–325 lie on the Cytoplasmic side of the membrane; that stretch reads RSQEMRRTFKEIICCHGFRRTCTLLGRY. 2 S-palmitoyl cysteine lipidation sites follow: Cys311 and Cys312.

This sequence belongs to the G-protein coupled receptor 1 family. As to expression, very low expression levels is detected in brain, while high levels are found in adrenals, stomach, lung and spleen.

The protein resides in the cell membrane. Its function is as follows. Receptor for MSH (alpha, beta and gamma) and ACTH. The activity of this receptor is mediated by G proteins which activate adenylate cyclase. This receptor is a possible mediator of the immunomodulation properties of melanocortins. This Rattus norvegicus (Rat) protein is Melanocortin receptor 5 (Mc5r).